Reading from the N-terminus, the 261-residue chain is Pantothenate synthetase (261 aa).

29–36 (MGALHNGH) is an ATP binding site. His-36 functions as the Proton donor in the catalytic mechanism. Gln-60 is a binding site for (R)-pantoate. Gln-60 is a beta-alanine binding site. 147-150 (GEKD) provides a ligand contact to ATP. Gln-153 lines the (R)-pantoate pocket. An ATP-binding site is contributed by 184–187 (LSSR).

The protein belongs to the pantothenate synthetase family. As to quaternary structure, homodimer.

It localises to the cytoplasm. It catalyses the reaction (R)-pantoate + beta-alanine + ATP = (R)-pantothenate + AMP + diphosphate + H(+). The protein operates within cofactor biosynthesis; (R)-pantothenate biosynthesis; (R)-pantothenate from (R)-pantoate and beta-alanine: step 1/1. In terms of biological role, catalyzes the condensation of pantoate with beta-alanine in an ATP-dependent reaction via a pantoyl-adenylate intermediate. In Francisella tularensis subsp. mediasiatica (strain FSC147), this protein is Pantothenate synthetase.